Reading from the N-terminus, the 424-residue chain is Kynureninase (424 aa).

Pyridoxal 5'-phosphate contacts are provided by residues leucine 106, threonine 107, 134–137 (FPSD), aspartate 219, histidine 222, and tyrosine 244. N6-(pyridoxal phosphate)lysine is present on lysine 245. The pyridoxal 5'-phosphate site is built by tryptophan 274 and asparagine 302.

It belongs to the kynureninase family. In terms of assembly, homodimer. The cofactor is pyridoxal 5'-phosphate.

The enzyme catalyses L-kynurenine + H2O = anthranilate + L-alanine + H(+). It carries out the reaction 3-hydroxy-L-kynurenine + H2O = 3-hydroxyanthranilate + L-alanine + H(+). The protein operates within amino-acid degradation; L-kynurenine degradation; L-alanine and anthranilate from L-kynurenine: step 1/1. Its pathway is cofactor biosynthesis; NAD(+) biosynthesis; quinolinate from L-kynurenine: step 2/3. Functionally, catalyzes the cleavage of L-kynurenine (L-Kyn) and L-3-hydroxykynurenine (L-3OHKyn) into anthranilic acid (AA) and 3-hydroxyanthranilic acid (3-OHAA), respectively. This Xanthomonas campestris pv. campestris (strain B100) protein is Kynureninase.